We begin with the raw amino-acid sequence, 882 residues long: Kelch repeat-containing protein 2 (882 aa).

Residues 41-60 are disordered; the sequence is TPTLPPNQHRGISGASTALP. 6 Kelch repeats span residues 99-143, 153-207, 213-267, 268-317, 319-369, and 371-417; these read RIFV…PPRV, AYVV…IIAS, KLYL…AYDN, KLWV…VYKH, MCVL…LMKN, and KLLI…LCPG. Phosphothreonine is present on Thr-455. A compositionally biased stretch (basic and acidic residues) spans 480–496; the sequence is LDDKAFERKSDREEKKP. The disordered stretch occupies residues 480-516; that stretch reads LDDKAFERKSDREEKKPQSSKVDSSINKESPGTGIKV. The segment covering 498 to 509 has biased composition (polar residues); it reads SSKVDSSINKES. Phosphoserine is present on Ser-509. Coiled coils occupy residues 550–685 and 728–881; these read KNLF…QKIT and NKIE…LEQK.

Interacts with KEL1.

The sequence is that of Kelch repeat-containing protein 2 (KEL2) from Saccharomyces cerevisiae (strain ATCC 204508 / S288c) (Baker's yeast).